A 631-amino-acid polypeptide reads, in one-letter code: Phosphomethylpyrimidine synthase (631 aa).

Substrate-binding positions include Asn-239, Met-268, Tyr-297, His-333, 353–355 (SRG), 394–397 (DGLR), and Glu-433. His-437 serves as a coordination point for Zn(2+). Residue Tyr-460 coordinates substrate. Zn(2+) is bound at residue His-501. [4Fe-4S] cluster is bound by residues Cys-581, Cys-584, and Cys-589.

The protein belongs to the ThiC family. In terms of assembly, homodimer. The cofactor is [4Fe-4S] cluster.

The enzyme catalyses 5-amino-1-(5-phospho-beta-D-ribosyl)imidazole + S-adenosyl-L-methionine = 4-amino-2-methyl-5-(phosphooxymethyl)pyrimidine + CO + 5'-deoxyadenosine + formate + L-methionine + 3 H(+). The protein operates within cofactor biosynthesis; thiamine diphosphate biosynthesis. Its function is as follows. Catalyzes the synthesis of the hydroxymethylpyrimidine phosphate (HMP-P) moiety of thiamine from aminoimidazole ribotide (AIR) in a radical S-adenosyl-L-methionine (SAM)-dependent reaction. The chain is Phosphomethylpyrimidine synthase from Shigella boydii serotype 4 (strain Sb227).